A 167-amino-acid chain; its full sequence is uncharacterized protein (167 aa).

2 consecutive transmembrane segments (helical) span residues Y96–Y115 and W119–V138.

The protein resides in the cell membrane. This is an uncharacterized protein from Bacillus subtilis (strain 168).